The chain runs to 364 residues: Fructose-bisphosphate aldolase C (364 aa).

Tyrosine 5 carries the post-translational modification Phosphotyrosine. 3 positions are modified to phosphoserine: serine 36, serine 39, and serine 45. Residue arginine 56 participates in substrate binding. Lysine 111 is subject to N6-acetyllysine. Serine 132 bears the Phosphoserine mark. Lysine 147 is a binding site for substrate. Glutamate 188 acts as the Proton acceptor in catalysis. Catalysis depends on lysine 230, which acts as the Schiff-base intermediate with dihydroxyacetone-P.

It belongs to the class I fructose-bisphosphate aldolase family. In terms of assembly, homotetramer. Interacts with ATP6V1E1.

The catalysed reaction is beta-D-fructose 1,6-bisphosphate = D-glyceraldehyde 3-phosphate + dihydroxyacetone phosphate. Its pathway is carbohydrate degradation; glycolysis; D-glyceraldehyde 3-phosphate and glycerone phosphate from D-glucose: step 4/4. The chain is Fructose-bisphosphate aldolase C (ALDOC) from Macaca fascicularis (Crab-eating macaque).